Consider the following 270-residue polypeptide: Proteasome inhibitor PI31 subunit (270 aa).

Position 2 is an N-acetylalanine (Ala2). The segment at 2–150 is important for homodimerization and interaction with FBXO7; sequence AGLEVLFASA…PIHEQWEKAN (149 aa). Ser152 bears the Phosphoserine mark. An Omega-N-methylarginine modification is found at Arg204. Asymmetric dimethylarginine is present on Arg218. The interval 220–270 is disordered; sequence LIDPSSGLPNRLPPGAVPPGARFDPFGPIGTSPSGPNPDHLPPPGYDDMYL. Arg230 bears the Omega-N-methylarginine mark. Phosphoserine is present on Ser251. A compositionally biased stretch (pro residues) spans 254 to 264; sequence GPNPDHLPPPG.

Belongs to the proteasome inhibitor PI31 family. In terms of assembly, monomer and homodimer. Interacts with FBXO7.

The protein resides in the cytoplasm. It localises to the endoplasmic reticulum. Functionally, plays an important role in control of proteasome function. Inhibits the hydrolysis of protein and peptide substrates by the 20S proteasome. Also inhibits the activation of the proteasome by the proteasome regulatory proteins PA700 and PA28. The sequence is that of Proteasome inhibitor PI31 subunit (PSMF1) from Bos taurus (Bovine).